Consider the following 232-residue polypeptide: Ornithine carbamoyltransferase (232 aa).

Residues Gln-15, Arg-39, and 66-69 (HPTQ) contribute to the carbamoyl phosphate site. L-ornithine is bound by residues Asn-99, Asp-163, and 167–168 (SM). Carbamoyl phosphate is bound by residues 204–207 (HCLP) and Thr-232.

The protein belongs to the aspartate/ornithine carbamoyltransferase superfamily. OTCase family.

Its subcellular location is the cytoplasm. It carries out the reaction carbamoyl phosphate + L-ornithine = L-citrulline + phosphate + H(+). Its pathway is amino-acid biosynthesis; L-arginine biosynthesis; L-arginine from L-ornithine and carbamoyl phosphate: step 1/3. This chain is Ornithine carbamoyltransferase (argF), found in Neisseria animalis.